The chain runs to 185 residues: Elongation factor P (185 aa).

This sequence belongs to the elongation factor P family.

The protein resides in the cytoplasm. Its pathway is protein biosynthesis; polypeptide chain elongation. In terms of biological role, involved in peptide bond synthesis. Stimulates efficient translation and peptide-bond synthesis on native or reconstituted 70S ribosomes in vitro. Probably functions indirectly by altering the affinity of the ribosome for aminoacyl-tRNA, thus increasing their reactivity as acceptors for peptidyl transferase. This Limosilactobacillus reuteri (strain DSM 20016) (Lactobacillus reuteri) protein is Elongation factor P.